A 264-amino-acid polypeptide reads, in one-letter code: Homeobox protein vent1 (264 aa).

Composition is skewed to basic and acidic residues over residues 16 to 26 and 44 to 59; these read KEEATDGKDSM and YAKE…DVQE. Residues 16-140 form a disordered region; it reads KEEATDGKDS…RLRTAFTPQQ (125 aa). Residues 60–80 are compositionally biased toward polar residues; that stretch reads HTTSFQCSLGEQVINRPSANP. Over residues 117 to 130 the composition is skewed to basic and acidic residues; it reads TEQREKSPKSDLQR. The homeobox DNA-binding region spans 129–188; sequence QRRLRTAFTPQQISKLEQAFNKQRYLGAPERKKLATSLQLSEIQVKTWFQNRRMKLKRQI.

Expressed in the ventral marginal zone of gastrulae. At stage 11.5, also expressed in the ventral region of the animal cap (ectoderm). At the end of gastrulation, predominantly localized to the ventral and lateral regions of the closing slit blastopore. At early tail bud stage, expression is maintained only in the forming proctodeum.

It localises to the nucleus. Functionally, transcriptional repressor. Cooperates with vent2 in a ventral signaling pathway downstream of bmp4, which antagonizes the Spemann organizer and dorsal mesoderm formation, and leads to ventral mesoderm formation. Acts downstream of bmp4 to repress transcription of foxa4-B/XFD-1'. Binds to DNA with preference for the target sequence 5'-CTATT[T/C]G-3'. Also binds 5'-TGCATTTTG-3' at a lower frequency, and occasionally 5'-TTGATC-3'. Binds to the homeobox 2 (HBX2) repressor element in the promoter of the myf5 gene and represses myf5 transcription in the ventral domain. The polypeptide is Homeobox protein vent1 (vent1) (Xenopus laevis (African clawed frog)).